Reading from the N-terminus, the 361-residue chain is Phosphoserine aminotransferase (361 aa).

Residue Arg43 participates in L-glutamate binding. Residues 77 to 78 (AS), Trp103, Thr153, Asp173, and Gln196 each bind pyridoxal 5'-phosphate. Lys197 carries the post-translational modification N6-(pyridoxal phosphate)lysine. A pyridoxal 5'-phosphate-binding site is contributed by 238-239 (NT).

Belongs to the class-V pyridoxal-phosphate-dependent aminotransferase family. SerC subfamily. As to quaternary structure, homodimer. It depends on pyridoxal 5'-phosphate as a cofactor.

The protein resides in the cytoplasm. It carries out the reaction O-phospho-L-serine + 2-oxoglutarate = 3-phosphooxypyruvate + L-glutamate. It catalyses the reaction 4-(phosphooxy)-L-threonine + 2-oxoglutarate = (R)-3-hydroxy-2-oxo-4-phosphooxybutanoate + L-glutamate. The protein operates within amino-acid biosynthesis; L-serine biosynthesis; L-serine from 3-phospho-D-glycerate: step 2/3. Its pathway is cofactor biosynthesis; pyridoxine 5'-phosphate biosynthesis; pyridoxine 5'-phosphate from D-erythrose 4-phosphate: step 3/5. In terms of biological role, catalyzes the reversible conversion of 3-phosphohydroxypyruvate to phosphoserine and of 3-hydroxy-2-oxo-4-phosphonooxybutanoate to phosphohydroxythreonine. The sequence is that of Phosphoserine aminotransferase from Pseudomonas entomophila (strain L48).